Here is a 510-residue protein sequence, read N- to C-terminus: Adenosine deaminase 2 (510 aa).

A signal peptide spans 1–24; it reads MSGWPVLPALLLAVAMSSFHSATS. The tract at residues 25–95 is dimerization; it reads RDEERNRLLM…GLMEKSAVFN (71 aa). Residues histidine 107 and histidine 109 each contribute to the Zn(2+) site. Position 110 (aspartate 110) interacts with substrate. An N-linked (GlcNAc...) asparagine glycan is attached at asparagine 122. A PRB domain region spans residues 122 to 182; the sequence is NATYRPYCYF…TEFDNSLLRT (61 aa). A disulfide bridge links cysteine 132 with cysteine 156. The N-linked (GlcNAc...) asparagine glycan is linked to asparagine 171. Substrate is bound by residues 201 to 208, histidine 290, and glycine 323; that span reads WKKFKTIF. Histidine 353 contributes to the Zn(2+) binding site. Catalysis depends on glutamate 356, which acts as the Proton donor. An N-linked (GlcNAc...) asparagine glycan is attached at asparagine 375. Histidine 381 acts as the Proton acceptor in catalysis. Residue aspartate 438 coordinates Zn(2+). Aspartate 439 serves as a coordination point for substrate.

Belongs to the metallo-dependent hydrolases superfamily. Adenosine and AMP deaminases family. ADGF subfamily. In terms of assembly, homodimer. Interacts with adenosine receptors. Binds heparin. The cofactor is Zn(2+).

The protein resides in the secreted. It catalyses the reaction adenosine + H2O + H(+) = inosine + NH4(+). In terms of biological role, adenosine deaminase that may contribute to the degradation of extracellular adenosine, a signaling molecule that controls a variety of cellular responses. Requires elevated adenosine levels for optimal enzyme activity. Binds to cell surfaces via proteoglycans and may play a role in the regulation of cell proliferation and differentiation, independently of its enzyme activity. This is Adenosine deaminase 2 from Sus scrofa (Pig).